Here is a 103-residue protein sequence, read N- to C-terminus: uncharacterized protein (103 aa).

This is an uncharacterized protein from Acanthamoeba polyphaga mimivirus (APMV).